A 232-amino-acid chain; its full sequence is Thiamine import ATP-binding protein ThiQ (232 aa).

One can recognise an ABC transporter domain in the interval 2-230 (LKLTDITWLY…KASASALLGI (229 aa)). ATP is bound at residue 32 to 39 (GPSGAGKS).

Belongs to the ABC transporter superfamily. Thiamine importer (TC 3.A.1.19.1) family. As to quaternary structure, the complex is composed of two ATP-binding proteins (ThiQ), two transmembrane proteins (ThiP) and a solute-binding protein (ThiB).

It is found in the cell inner membrane. The catalysed reaction is thiamine(out) + ATP + H2O = thiamine(in) + ADP + phosphate + H(+). Part of the ABC transporter complex ThiBPQ involved in thiamine import. Responsible for energy coupling to the transport system. This is Thiamine import ATP-binding protein ThiQ from Escherichia coli O157:H7.